The primary structure comprises 351 residues: Anthranilate phosphoribosyltransferase (351 aa).

5-phospho-alpha-D-ribose 1-diphosphate contacts are provided by residues G80, 83-84, T88, 90-93, 108-116, and S120; these read GD, NVST, and KHGNRSVTS. An anthranilate-binding site is contributed by G80. S92 is a binding site for Mg(2+). N111 provides a ligand contact to anthranilate. Position 166 (R166) interacts with anthranilate. Mg(2+) is bound by residues D229 and E230.

It belongs to the anthranilate phosphoribosyltransferase family. As to quaternary structure, homodimer. Mg(2+) is required as a cofactor.

The catalysed reaction is N-(5-phospho-beta-D-ribosyl)anthranilate + diphosphate = 5-phospho-alpha-D-ribose 1-diphosphate + anthranilate. The protein operates within amino-acid biosynthesis; L-tryptophan biosynthesis; L-tryptophan from chorismate: step 2/5. Functionally, catalyzes the transfer of the phosphoribosyl group of 5-phosphorylribose-1-pyrophosphate (PRPP) to anthranilate to yield N-(5'-phosphoribosyl)-anthranilate (PRA). The protein is Anthranilate phosphoribosyltransferase of Prosthecochloris aestuarii (strain DSM 271 / SK 413).